Reading from the N-terminus, the 61-residue chain is Small ribosomal subunit protein bS21 (61 aa).

It belongs to the bacterial ribosomal protein bS21 family.

The polypeptide is Small ribosomal subunit protein bS21 (Leuconostoc mesenteroides subsp. mesenteroides (strain ATCC 8293 / DSM 20343 / BCRC 11652 / CCM 1803 / JCM 6124 / NCDO 523 / NBRC 100496 / NCIMB 8023 / NCTC 12954 / NRRL B-1118 / 37Y)).